A 396-amino-acid polypeptide reads, in one-letter code: Alanine racemase (396 aa).

The active-site Proton acceptor; specific for D-alanine is the K46. K46 bears the N6-(pyridoxal phosphate)lysine mark. R145 is a substrate binding site. The active-site Proton acceptor; specific for L-alanine is the Y280. M328 contacts substrate.

This sequence belongs to the alanine racemase family. Requires pyridoxal 5'-phosphate as cofactor.

It catalyses the reaction L-alanine = D-alanine. Its pathway is amino-acid biosynthesis; D-alanine biosynthesis; D-alanine from L-alanine: step 1/1. In terms of biological role, catalyzes the interconversion of L-alanine and D-alanine. May also act on other amino acids. The protein is Alanine racemase (alr) of Brucella abortus (strain 2308).